A 367-amino-acid polypeptide reads, in one-letter code: CST complex subunit STN1 (367 aa).

Residues 56–154 (VEILGTVIGR…EIRVTTYYKV (99 aa)) constitute a DNA-binding region (OB). 2 winged helix-turn-helix (wHTH) regions span residues 190-294 (RAFS…YVTR) and 295-367 (EDKE…YTAF).

It belongs to the STN1 family. In terms of assembly, component of the CST complex, composed of TEN1, CTC1 and STN1. Interacts with TEN1 and CTC1; the interaction is direct. Interacts with ACD/TPP1.

Its subcellular location is the nucleus. It localises to the chromosome. The protein resides in the telomere. Functionally, component of the CST complex, a complex that binds to single-stranded DNA and is required to protect telomeres from DNA degradation. The CST complex binds single-stranded DNA with high affinity in a sequence-independent manner, while isolated subunits bind DNA with low affinity by themselves. In addition to telomere protection, the CST complex has probably a more general role in DNA metabolism at non-telomeric sites. The sequence is that of CST complex subunit STN1 from Ailuropoda melanoleuca (Giant panda).